A 249-amino-acid polypeptide reads, in one-letter code: Probable phosphatase Spea_1436 (249 aa).

Residues H8, H10, H16, H41, E74, H102, H132, D193, and H195 each contribute to the Zn(2+) site.

The protein belongs to the PHP family. The cofactor is Zn(2+).

The chain is Probable phosphatase Spea_1436 from Shewanella pealeana (strain ATCC 700345 / ANG-SQ1).